Here is a 137-residue protein sequence, read N- to C-terminus: MPTINQLVRKPRKSKTKQSDSPALNRGFNSKKKQFTNLNSPQKRGVCTRVGTMTPKKPNSALRKYARVRLSNNIEVNAYIPGIGHNLQEHSVVLVRGGRVKDLPGVRYHIVRGALDTSGVDGRRQGRSLYGTKKPKN.

The segment at 1-55 (MPTINQLVRKPRKSKTKQSDSPALNRGFNSKKKQFTNLNSPQKRGVCTRVGTMTP) is disordered. Asp-102 carries the post-translational modification 3-methylthioaspartic acid. Residues 118 to 137 (SGVDGRRQGRSLYGTKKPKN) form a disordered region.

This sequence belongs to the universal ribosomal protein uS12 family. Part of the 30S ribosomal subunit. Contacts proteins S8 and S17. May interact with IF1 in the 30S initiation complex.

With S4 and S5 plays an important role in translational accuracy. In terms of biological role, interacts with and stabilizes bases of the 16S rRNA that are involved in tRNA selection in the A site and with the mRNA backbone. Located at the interface of the 30S and 50S subunits, it traverses the body of the 30S subunit contacting proteins on the other side and probably holding the rRNA structure together. The combined cluster of proteins S8, S12 and S17 appears to hold together the shoulder and platform of the 30S subunit. This Staphylococcus epidermidis (strain ATCC 35984 / DSM 28319 / BCRC 17069 / CCUG 31568 / BM 3577 / RP62A) protein is Small ribosomal subunit protein uS12.